The chain runs to 53 residues: UPF0391 membrane protein YtjA (53 aa).

2 consecutive transmembrane segments (helical) span residues W4–A24 and A30–M48.

This sequence belongs to the UPF0391 family.

It localises to the cell membrane. In Salmonella agona (strain SL483), this protein is UPF0391 membrane protein YtjA.